The sequence spans 717 residues: Delta-1-pyrroline-5-carboxylate synthase A (717 aa).

Residues 1–296 (MEELDRSRAF…WAPITDSNAR (296 aa)) form a glutamate 5-kinase region. Substrate-binding residues include Ser60, Asp157, and Asn176. ATP contacts are provided by residues 196–197 (SD) and 236–242 (RGGMTAK). Residues 297–717 (DMAVAARESS…YTHQDIPIQA (421 aa)) are gamma-glutamyl phosphate reductase.

In the N-terminal section; belongs to the glutamate 5-kinase family. The protein in the C-terminal section; belongs to the gamma-glutamyl phosphate reductase family.

It catalyses the reaction L-glutamate + ATP = L-glutamyl 5-phosphate + ADP. It carries out the reaction L-glutamate 5-semialdehyde + phosphate + NADP(+) = L-glutamyl 5-phosphate + NADPH + H(+). The protein operates within amino-acid biosynthesis; L-proline biosynthesis; L-glutamate 5-semialdehyde from L-glutamate: step 1/2. It functions in the pathway amino-acid biosynthesis; L-proline biosynthesis; L-glutamate 5-semialdehyde from L-glutamate: step 2/2. In terms of biological role, P5CS plays a key role in proline biosynthesis, leading to osmoregulation in plants. This Arabidopsis thaliana (Mouse-ear cress) protein is Delta-1-pyrroline-5-carboxylate synthase A (P5CSA).